Reading from the N-terminus, the 77-residue chain is Serine protease inhibitor 2 (77 aa).

Residues Met1 to Ala17 form the signal peptide. 5 disulfide bridges follow: Cys21–Cys53, Cys30–Cys48, Cys33–Cys44, Cys37–Cys74, and Cys55–Cys68. The 54-residue stretch at Cys21–Cys74 folds into the TIL domain.

Its subcellular location is the secreted. In terms of biological role, defends the organism against the host's proteinases. The protein is Serine protease inhibitor 2 of Anisakis simplex (Herring worm).